Here is a 232-residue protein sequence, read N- to C-terminus: Endonuclease NucS (232 aa).

This sequence belongs to the NucS endonuclease family.

The protein resides in the cytoplasm. Cleaves both 3' and 5' ssDNA extremities of branched DNA structures. In Mycobacteroides abscessus (strain ATCC 19977 / DSM 44196 / CCUG 20993 / CIP 104536 / JCM 13569 / NCTC 13031 / TMC 1543 / L948) (Mycobacterium abscessus), this protein is Endonuclease NucS.